Here is a 429-residue protein sequence, read N- to C-terminus: Kynureninase (429 aa).

Pyridoxal 5'-phosphate contacts are provided by residues L109, T110, 137 to 140, D222, H225, and Y247; that span reads FPSD. Residue K248 is modified to N6-(pyridoxal phosphate)lysine. Pyridoxal 5'-phosphate is bound by residues W278 and N306.

This sequence belongs to the kynureninase family. As to quaternary structure, homodimer. It depends on pyridoxal 5'-phosphate as a cofactor.

The catalysed reaction is L-kynurenine + H2O = anthranilate + L-alanine + H(+). It carries out the reaction 3-hydroxy-L-kynurenine + H2O = 3-hydroxyanthranilate + L-alanine + H(+). Its pathway is amino-acid degradation; L-kynurenine degradation; L-alanine and anthranilate from L-kynurenine: step 1/1. It participates in cofactor biosynthesis; NAD(+) biosynthesis; quinolinate from L-kynurenine: step 2/3. Its function is as follows. Catalyzes the cleavage of L-kynurenine (L-Kyn) and L-3-hydroxykynurenine (L-3OHKyn) into anthranilic acid (AA) and 3-hydroxyanthranilic acid (3-OHAA), respectively. This is Kynureninase from Salinispora tropica (strain ATCC BAA-916 / DSM 44818 / JCM 13857 / NBRC 105044 / CNB-440).